Reading from the N-terminus, the 130-residue chain is MAQVQYYGTGRRKSSVARVRLVPGDGRIIVNKQDIREYIPTEALIEMVKQPLVLTETLGSYDVLVNVHGGGFAGQAGAIRHGIARALLQVDPEFRTVLKRAGLLTRDARVKERKKYGLKGARRAPQFSKR.

Belongs to the universal ribosomal protein uS9 family.

The sequence is that of Small ribosomal subunit protein uS9 (rpsI) from Geobacillus stearothermophilus (Bacillus stearothermophilus).